The sequence spans 692 residues: MARKTPLNRIRNIGIAAHIDAGKTTTSERILFYTGVSHKIGEVHDGAATMDWMEQEKERGITITSAATTCFWKDHQINLIDTPGHVDFTIEVERSMRVLDGAVSVFCSVGGVQPQSETVWRQANKYGVPRIVFVNKMDRIGANFYNVENQIKQRLKANPVPINIPIGAEDTFIGVIDLVQMKAIVWNNETMGAKYDVEEIPSDLLEKAKQYREKLVEAVAEQDEALMEKYLGGEELNIEEIKKGIKTGCLNMSLIPMLCGSSFKNKGVQTLLDAVIDYLPAPTEVVDIKGIDPKTEEEVFVKSSDDGEFAGLAFKIMTDPFVGQLTFVRVYRGNLESGSYVYNSTKDKKERVGRLLKMHSNKREDIKEVYAGEICAFVGLKDTLTGDTLCDEKNAVVLERMEFPEPVIHIAVEPKTKADQEKMGVALGKLAEEDPSFRVMTQEETGQTLIGGMGELHLEIIVDRLKREFKVEAEIGQPQVAFRETIRSSVSKEHKYAKQSGGRGQYGHVFIKLEPKEPGSGYEFVNEISGGVIPKEYIPAVDKGIQEAMQNGVLAGYPVVDFKVTLYDGSYHDVDSSEMAFKIAGSMAFKEASRAANPVLLEPMMKVEVEVPEEYMGDVIGDLNRRRGQINSMDDRLGLKIVNAFVPLVEMFGYSTDLRSATQGRGTYSMEFDHYGEVPSNIAKEIVEKRKG.

The 276-residue stretch at asparagine 8–threonine 283 folds into the tr-type G domain. GTP is bound by residues alanine 17 to threonine 24, aspartate 81 to histidine 85, and asparagine 135 to aspartate 138.

This sequence belongs to the TRAFAC class translation factor GTPase superfamily. Classic translation factor GTPase family. EF-G/EF-2 subfamily.

The protein localises to the cytoplasm. Catalyzes the GTP-dependent ribosomal translocation step during translation elongation. During this step, the ribosome changes from the pre-translocational (PRE) to the post-translocational (POST) state as the newly formed A-site-bound peptidyl-tRNA and P-site-bound deacylated tRNA move to the P and E sites, respectively. Catalyzes the coordinated movement of the two tRNA molecules, the mRNA and conformational changes in the ribosome. This is Elongation factor G from Helicobacter pylori (strain P12).